A 735-amino-acid chain; its full sequence is Catalase-peroxidase (735 aa).

The segment at residues 97 to 220 is a cross-link (tryptophyl-tyrosyl-methioninium (Trp-Tyr) (with M-246)); sequence WHAAGTYRIG…LAAVQMGLIY (124 aa). H98 (proton acceptor) is an active-site residue. The segment at residues 220–246 is a cross-link (tryptophyl-tyrosyl-methioninium (Tyr-Met) (with W-97)); sequence YVNPEGPNGKPDPMAAAHDIRETFGRM. H261 contacts heme b. The interval 342–362 is disordered; it reads AHQWTPKNPEAASTVPDAHDP.

The protein belongs to the peroxidase family. Peroxidase/catalase subfamily. Homodimer or homotetramer. The cofactor is heme b. In terms of processing, formation of the three residue Trp-Tyr-Met cross-link is important for the catalase, but not the peroxidase activity of the enzyme.

The catalysed reaction is H2O2 + AH2 = A + 2 H2O. The enzyme catalyses 2 H2O2 = O2 + 2 H2O. Functionally, bifunctional enzyme with both catalase and broad-spectrum peroxidase activity. This chain is Catalase-peroxidase, found in Gloeobacter violaceus (strain ATCC 29082 / PCC 7421).